The chain runs to 195 residues: MSGASRGLFWAATCLAALCLSAAQSNSSASPNVTDPPTTTSKVVPTTLTTTKPPETCESFNSCVSCVNATLTNNITCVWLDCHEANKTYCSSELVSNCTQKTSTDSCSVIPTTPVPTNSTAKPTTRPSSPTPTPSVVTSAGATNTTVTPTSQPERKSTFDAASFIGGIVLVLGVQAVIFFLYKFCKSKERNYHTL.

Positions 1-23 (MSGASRGLFWAATCLAALCLSAA) are cleaved as a signal peptide. Residues 24–160 (QSNSSASPNV…SQPERKSTFD (137 aa)) are Extracellular-facing. Residues asparagine 26, asparagine 32, asparagine 68, asparagine 74, asparagine 86, asparagine 97, and asparagine 118 are each glycosylated (N-linked (GlcNAc...) asparagine). Residues 27 to 47 (SSASPNVTDPPTTTSKVVPTT) form a disordered region. The segment at 114–154 (PVPTNSTAKPTTRPSSPTPTPSVVTSAGATNTTVTPTSQPE) is disordered. The span at 119 to 140 (STAKPTTRPSSPTPTPSVVTSA) shows a compositional bias: low complexity. Residues 141 to 152 (GATNTTVTPTSQ) are compositionally biased toward polar residues. A glycan (N-linked (GlcNAc...) asparagine) is linked at asparagine 144. The chain crosses the membrane as a helical span at residues 161-181 (AASFIGGIVLVLGVQAVIFFL). The Cytoplasmic portion of the chain corresponds to 182 to 195 (YKFCKSKERNYHTL). The required for endosomal and lysosomal localization stretch occupies residues 189–195 (ERNYHTL).

The protein belongs to the CD164 family. Interacts with CXCR4. Post-translationally, highly N- and O-glycosylated; contains sialic acid. In terms of tissue distribution, ubiquitous. Expressed at highest levels in the liver, kidney, lung and intestine.

The protein localises to the cell membrane. It is found in the lysosome membrane. It localises to the endosome membrane. In terms of biological role, sialomucin that may play a key role in hematopoiesis. May be involved in cell adhesion. Promotes myogenesis by enhancing CXCR4-dependent cell motility. Positively regulates myoblast migration and promotes myoblast fusion into myotubes. The chain is Sialomucin core protein 24 (Cd164) from Rattus norvegicus (Rat).